Reading from the N-terminus, the 175-residue chain is Glucagon family neuropeptides (175 aa).

Positions 1 to 23 are cleaved as a signal peptide; it reads MSGNVYKTLLTLLVYGLIMHCNV. A propeptide spanning residues 24–80 is cleaved from the precursor; it reads YCSPDRWTPVPGAKLEEEVYDEDGNTLQDFALRAGAPGGGGPRPRWGRCTALYYPPG. An important for receptor binding region spans residues 149-157; that stretch reads VKKYLAAVL. L157 is modified (leucine amide). The residue at position 168 (K168) is a Lysine amide. A propeptide spanning residues 172-175 is cleaved from the precursor; it reads VAYL.

This sequence belongs to the glucagon family.

The protein resides in the secreted. In terms of biological role, primary role of GRF is to release GH from the pituitary. Its function is as follows. PACAP is a neuropeptide involved in diverse array of physiological processes through activating the PACAP subfamily of class B1 G protein-coupled receptors: VIP receptor 1 (VIPR1), VIP receptor 2 (VIPR2), and PACAP type I receptor (ADCYAP1R1). Exerts neuroprotective and general cytoprotective effects due to anti-apoptotic, anti-inflammatory, and antioxidant actions. Promotes neuron projection development through the RAPGEF2/Rap1/B-Raf/ERK pathway. In chromaffin cells, induces long-lasting increase of intracellular calcium concentrations and neuroendocrine secretion. Involved in the control of glucose homeostasis, induces insulin secretion by pancreatic beta cells. PACAP exists in two bioactive forms from proteolysis of the same precursor protein, PACAP27 and PACAP38, which differ by eleven amino acid residues in the C-terminus. The protein is Glucagon family neuropeptides (ADCYAP1) of Gallus gallus (Chicken).